Here is a 601-residue protein sequence, read N- to C-terminus: ATP-dependent rRNA helicase SPB4 (601 aa).

The short motif at 14–42 (LAWSQASLQPWIHDAIDSLGFRSMTPVQA) is the Q motif element. The Helicase ATP-binding domain occupies 45–228 (IPLFCGNKDV…RTGMSNPVKI (184 aa)). Position 58–65 (58–65 (AVTGSGKT)) interacts with ATP. A DEAD box motif is present at residues 176 to 179 (DEAD). The Helicase C-terminal domain occupies 257 to 419 (VLINMLSTLQ…AYKAFSKNLR (163 aa)). A coiled-coil region spans residues 507–575 (KEKIRLETME…QIMNESSDEE (69 aa)). A compositionally biased stretch (basic and acidic residues) spans 532 to 554 (LKVKNEAWSSKNEKKEGKQERRE). The tract at residues 532–576 (LKVKNEAWSSKNEKKEGKQERREKMKRKREAIEKQIMNESSDEET) is disordered.

It belongs to the DEAD box helicase family. DDX55/SPB4 subfamily. Component of pre-60S ribosomal complexes.

The protein resides in the nucleus. Its subcellular location is the nucleolus. It carries out the reaction ATP + H2O = ADP + phosphate + H(+). Its function is as follows. ATP-binding RNA helicase involved in the biogenesis of 60S ribosomal subunits. Binds 90S pre-ribosomal particles and dissociates from pre-60S ribosomal particles after processing of 27SB pre-rRNA. Required for the normal formation of 18S rRNA through the processing of pre-rRNAs at sites A0, A1 and A2, and the normal formation of 25S and 5.8S rRNAs through the processing of pre-rRNAs at sites C1 and C2. In Meyerozyma guilliermondii (strain ATCC 6260 / CBS 566 / DSM 6381 / JCM 1539 / NBRC 10279 / NRRL Y-324) (Yeast), this protein is ATP-dependent rRNA helicase SPB4.